The chain runs to 597 residues: MSGGDRFVQTLQKLNYPKGAQLDGEDFDWLFEAVDLKPFLDWFCSAASEQNVVPDEKLQAFNTLKESGKPVLDEKALDEVLKTFSISKVPAIEEVAIEKLEEEVKALQKQKNLHIRRRNKLQMVESGNRQMCLKSKDKEEETGRAFQEVLHLLRVTNKKLNHELQSIVNGVQTLMSFFSTPETACELSSQPIFLSQLLLDKYLSLEEQSTAALTSFTKEHFFEGMSKFVEGSDENFQLVQLNVNSFGEDGTTEDKCKEMMRLQLAYICAKHKLIQMKAKSASLKVGLQWAENNASVVQDKASQKEENLKVRITSLKNETLQIENHTNSISNEKLPGLVRDNAQLLNMPIVKGDYDLQMAHQTSCSSRQDLVCDHLMKQKASFELLQLGYELELRKHRDVYRELGSIVQELKESGDKLEERLTMLSDVNLLSASKPRSNIDSKDLTSHRLYQLLDGDNTQKLFRTYDGLESVAQKLSQDIASMRDQLEVSEQEHSLLLSKLDSHLKELRDFMYPEGNTLMLTTPELSGEFHQLGSQLEKLNHITVEILGDLQLKRKMLESNKLQQIEKQLYVYFFQNEEQLKSIVGKLEAQTGGGSSA.

4 coiled-coil regions span residues 91–123 (AIEE…KLQM), 290–319 (AENN…KNET), 392–428 (ELRK…SDVN), and 463–494 (RTYD…QEHS).

This sequence belongs to the HAUS3 family. Component of the HAUS augmin-like complex. The complex interacts with the gamma-tubulin ring complex and this interaction is required for spindle assembly.

The protein localises to the cytoplasm. It is found in the cytoskeleton. It localises to the microtubule organizing center. Its subcellular location is the centrosome. The protein resides in the spindle. In terms of biological role, contributes to mitotic spindle assembly, maintenance of centrosome integrity and completion of cytokinesis as part of the HAUS augmin-like complex. This Xenopus laevis (African clawed frog) protein is HAUS augmin-like complex subunit 3 (haus3).